Consider the following 165-residue polypeptide: Small ribosomal subunit protein uS13 (165 aa).

Positions 139–165 (GMTIGVARKKAAQPQSQQSSSQQQKSS) are disordered. Over residues 153–165 (QSQQSSSQQQKSS) the composition is skewed to low complexity.

The protein belongs to the universal ribosomal protein uS13 family. In terms of assembly, part of the 30S ribosomal subunit. Forms a loose heterodimer with protein S19. Forms two bridges to the 50S subunit in the 70S ribosome.

In terms of biological role, located at the top of the head of the 30S subunit, it contacts several helices of the 16S rRNA. In the 70S ribosome it contacts the 23S rRNA (bridge B1a) and protein L5 of the 50S subunit (bridge B1b), connecting the 2 subunits; these bridges are implicated in subunit movement. This chain is Small ribosomal subunit protein uS13, found in Saccharolobus solfataricus (strain ATCC 35092 / DSM 1617 / JCM 11322 / P2) (Sulfolobus solfataricus).